Consider the following 44-residue polypeptide: MMKRLLGLVMLLLFTCTLLTGCNTARGFGEDIKHLGNSISHAAS.

An N-terminal signal peptide occupies residues 1–21 (MMKRLLGLVMLLLFTCTLLTG). The N-palmitoyl cysteine moiety is linked to residue cysteine 22. Cysteine 22 carries the S-diacylglycerol cysteine lipid modification.

This sequence belongs to the EcnA/EcnB lipoprotein family.

It localises to the cell membrane. Its function is as follows. Acts as antidote to the effect of entericidin B. This chain is Entericidin A (ecnA), found in Citrobacter freundii.